The following is a 247-amino-acid chain: Orotidine 5'-phosphate decarboxylase (247 aa).

Substrate-binding positions include aspartate 22, lysine 44, 71 to 80, threonine 131, arginine 192, glutamine 201, glycine 221, and arginine 222; that span reads DLKFHDIPNT. Lysine 73 (proton donor) is an active-site residue.

Belongs to the OMP decarboxylase family. Type 1 subfamily. In terms of assembly, homodimer.

The catalysed reaction is orotidine 5'-phosphate + H(+) = UMP + CO2. It participates in pyrimidine metabolism; UMP biosynthesis via de novo pathway; UMP from orotate: step 2/2. Functionally, catalyzes the decarboxylation of orotidine 5'-monophosphate (OMP) to uridine 5'-monophosphate (UMP). The protein is Orotidine 5'-phosphate decarboxylase of Pectobacterium atrosepticum (strain SCRI 1043 / ATCC BAA-672) (Erwinia carotovora subsp. atroseptica).